We begin with the raw amino-acid sequence, 293 residues long: PHD finger protein 11A (293 aa).

The segment at Lys-25 to Leu-61 adopts a C2HC pre-PHD-type zinc-finger fold. The PHD-type; degenerate zinc finger occupies Leu-91–Ala-143. Positions Ser-262–Leu-293 are disordered.

It localises to the nucleus. The polypeptide is PHD finger protein 11A (Phf11a) (Mus musculus (Mouse)).